Reading from the N-terminus, the 778-residue chain is Tubulin polyglutamylase ttll6 (778 aa).

Residues 1–43 form a disordered region; sequence MGTPAERSVSEVCRCEPDPGLEGEGWGSDTHAEPSNTPIPLPV. The 343-residue stretch at 51-393 folds into the TTL domain; sequence KKKLWINLTN…LGACDRRKIT (343 aa). ATP is bound by residues Lys-168, 174–175, 196–199, and 209–211; these read QG, QVYM, and KFD. Residue Gln-174 participates in a protein binding. Arg-235 provides a ligand contact to L-glutamate. An ATP-binding site is contributed by 257 to 258; that stretch reads TN. Residues Tyr-259 and Lys-277 each coordinate L-glutamate. Residues Asp-340, Glu-353, and Asn-355 each contribute to the Mg(2+) site. His-356 lines the a protein pocket. The interval 365-445 is c-MTBD region; it reads RLDREVKDSL…MGGFRRIFPR (81 aa). Lys-371 is a binding site for L-glutamate. Basic and acidic residues-rich tracts occupy residues 402 to 418, 485 to 510, 533 to 542, and 760 to 778; these read ERLQ…EEPR, KQEQ…GEKV, SVREETPVSL, and LSHD…EHSL. Disordered stretches follow at residues 402-422, 485-542, and 758-778; these read ERLQ…QSQA, KQEQ…PVSL, and PHLS…EHSL.

It belongs to the tubulin--tyrosine ligase family. Mg(2+) is required as a cofactor.

It localises to the cytoplasm. It is found in the cytoskeleton. The protein resides in the cilium axoneme. The protein localises to the cilium basal body. It carries out the reaction L-glutamyl-[protein] + L-glutamate + ATP = gamma-L-glutamyl-L-glutamyl-[protein] + ADP + phosphate + H(+). The enzyme catalyses (L-glutamyl)(n)-gamma-L-glutamyl-L-glutamyl-[protein] + L-glutamate + ATP = (L-glutamyl)(n+1)-gamma-L-glutamyl-L-glutamyl-[protein] + ADP + phosphate + H(+). Functionally, polyglutamylase which modifies both tubulin and non-tubulin proteins, generating alpha-linked polyglutamate side chains on the gamma-carboxyl group of specific glutamate residues of target proteins. Preferentially mediates ATP-dependent long polyglutamate chain elongation over the initiation step of the polyglutamylation reaction. Preferentially modifies the alpha-tubulin tail over a beta-tail. Mediates microtubule polyglutamylation in cilia axoneme, which is important for ciliary structural formation and motility. Polyglutamylates olfactory cilia, necessary for the regulation of ciliary structure and beating. The chain is Tubulin polyglutamylase ttll6 from Danio rerio (Zebrafish).